The primary structure comprises 224 residues: Agamous-like MADS-box protein AGL9 homolog (224 aa).

An MADS-box domain is found at 3–57 (RGRVELKRIEGKINRQVTFAKRRNGLLKKAYELSVLCDAEVALIIFSNRGKLYEF). The K-box domain occupies 89–179 (EISSQQEYLK…KQRLMEGSQL (91 aa)).

As to expression, flower specific.

It localises to the nucleus. Probable transcription factor active in inflorescence development and floral organogenesis. The protein is Agamous-like MADS-box protein AGL9 homolog (TDR5) of Solanum lycopersicum (Tomato).